The sequence spans 85 residues: Phosphocarrier protein HPr (85 aa).

The HPr domain occupies 1–85 (MFQNQVKITA…HLSLIMTELE (85 aa)). H15 acts as the Pros-phosphohistidine intermediate in catalysis.

This sequence belongs to the HPr family.

It is found in the cytoplasm. Functionally, general (non sugar-specific) component of the phosphoenolpyruvate-dependent sugar phosphotransferase system (sugar PTS). This major carbohydrate active-transport system catalyzes the phosphorylation of incoming sugar substrates concomitantly with their translocation across the cell membrane. The phosphoryl group from phosphoenolpyruvate (PEP) is transferred to the phosphoryl carrier protein HPr by enzyme I. Phospho-HPr then transfers it to the PTS EIIA domain. The sequence is that of Phosphocarrier protein HPr (ptsH) from Buchnera aphidicola subsp. Acyrthosiphon pisum (strain APS) (Acyrthosiphon pisum symbiotic bacterium).